The chain runs to 1392 residues: Condensin complex subunit 1 (1392 aa).

The segment at 1–593 (MSPHNFEFHL…TGSKDSPSVP (593 aa)) is interaction with SMC2 and SMC4. A phosphoserine mark is found at serine 20 and serine 575. Disordered stretches follow at residues 569 to 602 (EASTQDSHGDTDPGLTGSKDSPSVPEPEGSQSND), 945 to 966 (REEQEHRAKEPKEKTASSETTM), and 1293 to 1392 (FETG…RHRS). Over residues 945–960 (REEQEHRAKEPKEKTA) the composition is skewed to basic and acidic residues. Serine 1300, serine 1305, serine 1320, and serine 1323 each carry phosphoserine. At threonine 1329 the chain carries Phosphothreonine. The Bipartite nuclear localization signal signature appears at 1332–1353 (PRRTKPGRPQTQQRKKSQRKAK). The span at 1344–1353 (QRKKSQRKAK) shows a compositional bias: basic residues. Phosphoserine is present on residues serine 1358, serine 1361, serine 1362, and serine 1367. Acidic residues predominate over residues 1360 to 1373 (ESSEDELSAEMTEE). Residues threonine 1375 and threonine 1380 each carry the phosphothreonine; by CDK1 modification. Position 1386 is a phosphoserine (serine 1386).

It belongs to the CND1 (condensin subunit 1) family. Component of the condensin complex, which contains the SMC2 and SMC4 heterodimer, and three non SMC subunits that probably regulate the complex: NCAPH/BRRN1, NCAPD2/CAPD2 and NCAPG. Interacts with histones H1 and H3. Post-translationally, phosphorylated by CDK1. Its phosphorylation, as well as that of NCAPH and NCAPG subunits, activates the condensin complex and is required for chromosome condensation.

It is found in the nucleus. The protein resides in the cytoplasm. The protein localises to the chromosome. In terms of biological role, regulatory subunit of the condensin complex, a complex required for conversion of interphase chromatin into mitotic-like condense chromosomes. The condensin complex probably introduces positive supercoils into relaxed DNA in the presence of type I topoisomerases and converts nicked DNA into positive knotted forms in the presence of type II topoisomerases. May target the condensin complex to DNA via its C-terminal domain. May promote the resolution of double-strand DNA catenanes (intertwines) between sister chromatids. Condensin-mediated compaction likely increases tension in catenated sister chromatids, providing directionality for type II topoisomerase-mediated strand exchanges toward chromatid decatenation. Required for decatenation of non-centromeric ultrafine DNA bridges during anaphase. Early in neurogenesis, may play an essential role to ensure accurate mitotic chromosome condensation in neuron stem cells, ultimately affecting neuron pool and cortex size. The sequence is that of Condensin complex subunit 1 (Ncapd2) from Mus musculus (Mouse).